A 270-amino-acid polypeptide reads, in one-letter code: Phosphatidylglycerol--prolipoprotein diacylglyceryl transferase (270 aa).

Helical transmembrane passes span 10 to 30 (VALA…LIGI), 56 to 76 (LIFW…VLFY), 92 to 112 (WKGG…AWWF), 120 to 140 (FFQL…AGRI), 174 to 194 (PSQL…LYIF), 202 to 222 (MAVS…VEFV), and 236 to 256 (WVTM…GLLW). Arginine 139 is a binding site for a 1,2-diacyl-sn-glycero-3-phospho-(1'-sn-glycerol).

Belongs to the Lgt family.

It localises to the cell inner membrane. It carries out the reaction L-cysteinyl-[prolipoprotein] + a 1,2-diacyl-sn-glycero-3-phospho-(1'-sn-glycerol) = an S-1,2-diacyl-sn-glyceryl-L-cysteinyl-[prolipoprotein] + sn-glycerol 1-phosphate + H(+). The protein operates within protein modification; lipoprotein biosynthesis (diacylglyceryl transfer). In terms of biological role, catalyzes the transfer of the diacylglyceryl group from phosphatidylglycerol to the sulfhydryl group of the N-terminal cysteine of a prolipoprotein, the first step in the formation of mature lipoproteins. This Pseudomonas fluorescens (strain SBW25) protein is Phosphatidylglycerol--prolipoprotein diacylglyceryl transferase.